We begin with the raw amino-acid sequence, 635 residues long: Extracellular metalloproteinase 1 (635 aa).

The N-terminal stretch at 1–19 is a signal peptide; it reads MHGLLLAAGLLSLPLHVLA. Residues 20 to 246 constitute a propeptide that is removed on maturation; sequence HPQPSTSTSL…VHNVVDYVAH (227 aa). Asn-287 carries N-linked (GlcNAc...) asparagine glycosylation. His-430 is a Zn(2+) binding site. The active site involves Glu-431. Residue His-434 coordinates Zn(2+). N-linked (GlcNAc...) asparagine glycans are attached at residues Asn-475, Asn-594, and Asn-623.

Belongs to the peptidase M36 family. Zn(2+) is required as a cofactor.

The protein localises to the secreted. Functionally, secreted metalloproteinase probably acting as a virulence factor. The sequence is that of Extracellular metalloproteinase 1 (MEP1) from Arthroderma benhamiae (Trichophyton mentagrophytes).